We begin with the raw amino-acid sequence, 122 residues long: uncharacterized protein (122 aa).

The Cytoplasmic segment spans residues 1-24 (MKNRKFSNLLLLRLRILCFNKKPA). The chain crosses the membrane as a helical span at residues 25–45 (FAATSYAFFFRNFSVLIFIMV). Over 46–57 (PDEKENGAAADN) the chain is Extracellular. A helical transmembrane segment spans residues 58–78 (SFSLLIGRGVVLFLFYCPTAL). The Cytoplasmic portion of the chain corresponds to 79–122 (KMHGPVPAHWFCDKNIEAIQSDGQIRLLRSGPFPWSHGTCIRGA).

It is found in the membrane. This is an uncharacterized protein from Saccharomyces cerevisiae (strain ATCC 204508 / S288c) (Baker's yeast).